A 116-amino-acid chain; its full sequence is Beta-D-galactosidase Rv1717 (116 aa).

The Cupin type-2 domain occupies 40–107 (LSVYRPGGTA…TDRQALLLVT (68 aa)).

The protein localises to the secreted. It localises to the cell wall. It carries out the reaction Hydrolysis of terminal non-reducing beta-D-galactose residues in beta-D-galactosides.. Its activity is regulated as follows. Beta-galactosidase activity is activated by Mg(2+) and significantly inhibited by Ca(2+), Cd(2+), Fe(2+), Ni(2+), Cu(2+) and Zn(2+). Inhibited by EDTA. Beta-D-galactopyranosidase that specifically recognizes the beta-glycosidic bonds formed with beta-D-galactopyranose (beta-D-Gal) or N-acetylgalactosamine (beta-D-GalNAc). May target the galactoside linkages in the exopolysaccharide component of the mycobacterial extracellular polymeric substance (EPS) and help dispersal of Mtb bacteria from a deteriorating biofilm. In Mycobacterium tuberculosis (strain ATCC 25618 / H37Rv), this protein is Beta-D-galactosidase Rv1717.